Here is a 564-residue protein sequence, read N- to C-terminus: ATP-dependent RNA helicase ROK1 (564 aa).

Disordered stretches follow at residues 1 to 25 and 62 to 87; these read MDIF…KAAD and EDDR…DGLI. Composition is skewed to basic and acidic residues over residues 13-23 and 62-86; these read VKKESGPKAKA and EDDR…DDGL. A Q motif motif is present at residues 122-150; it reads DLISRFSFDRRLLNNLIENGFTEPTPIQC. Residues 153–333 enclose the Helicase ATP-binding domain; that stretch reads IPVALNNRDV…QSIMMDPVRV (181 aa). Residue 166-173 coordinates ATP; that stretch reads GPTGSGKT. Positions 280–283 match the DEAD box motif; the sequence is DEAD. The Helicase C-terminal domain maps to 344-506; that stretch reads NIEQKLIFCG…EVSEWMDKMA (163 aa). The segment at 512–564 is disordered; that stretch reads EKESIKNGKAHKERKQITTVPKMDKAKRRRQQEMIAASKRRKNEELSKKHFSK. Residues 553–564 are compositionally biased toward basic and acidic residues; the sequence is KNEELSKKHFSK.

It belongs to the DEAD box helicase family. DDX52/ROK1 subfamily. Interacts with the U3 snoRNA and is associated with the 90S and 40S pre-ribosomes. This association requires the presence of RRP5. Also interacts with OSH3.

Its subcellular location is the nucleus. It is found in the nucleolus. It catalyses the reaction ATP + H2O = ADP + phosphate + H(+). In terms of biological role, ATP-dependent RNA helicase involved in 40S ribosomal subunit biogenesis. Required for the processing and cleavage of 35S pre-rRNA at sites A0, A1, and A2, leading to mature 18S rRNA. The polypeptide is ATP-dependent RNA helicase ROK1 (ROK1) (Saccharomyces cerevisiae (strain YJM789) (Baker's yeast)).